A 405-amino-acid chain; its full sequence is Farnesyl pyrophosphate synthase (405 aa).

Asp158 and Asp162 together coordinate Mg(2+). A DDXXD motif motif is present at residues 158–162 (DDLAD).

This sequence belongs to the FPP/GGPP synthase family. Mg(2+) serves as cofactor.

It catalyses the reaction isopentenyl diphosphate + (2E)-geranyl diphosphate = (2E,6E)-farnesyl diphosphate + diphosphate. It participates in pheromone biosynthesis. Functionally, farnesyl pyrophosphate synthase involved in murgantiol biosynthesis, a male-released aggregation pheromone, by catalyzing the formation of (2E,6E)-farnesyl diphosphate. In Murgantia histrionica (Harlequin bug), this protein is Farnesyl pyrophosphate synthase.